Here is a 190-residue protein sequence, read N- to C-terminus: Large ribosomal subunit protein bL9 (190 aa).

It belongs to the bacterial ribosomal protein bL9 family.

Binds to the 23S rRNA. The sequence is that of Large ribosomal subunit protein bL9 from Methylorubrum populi (strain ATCC BAA-705 / NCIMB 13946 / BJ001) (Methylobacterium populi).